The primary structure comprises 304 residues: Ribosomal RNA small subunit methyltransferase H (304 aa).

Residues glycine 36 to histidine 38, aspartate 53, phenylalanine 79, aspartate 98, and glutamine 105 contribute to the S-adenosyl-L-methionine site.

This sequence belongs to the methyltransferase superfamily. RsmH family.

Its subcellular location is the cytoplasm. The catalysed reaction is cytidine(1402) in 16S rRNA + S-adenosyl-L-methionine = N(4)-methylcytidine(1402) in 16S rRNA + S-adenosyl-L-homocysteine + H(+). Specifically methylates the N4 position of cytidine in position 1402 (C1402) of 16S rRNA. The chain is Ribosomal RNA small subunit methyltransferase H from Myxococcus xanthus (strain DK1622).